A 252-amino-acid chain; its full sequence is Imidazole glycerol phosphate synthase subunit HisF (252 aa).

Residues Asp11 and Asp130 contribute to the active site.

This sequence belongs to the HisA/HisF family. In terms of assembly, heterodimer of HisH and HisF.

It localises to the cytoplasm. The enzyme catalyses 5-[(5-phospho-1-deoxy-D-ribulos-1-ylimino)methylamino]-1-(5-phospho-beta-D-ribosyl)imidazole-4-carboxamide + L-glutamine = D-erythro-1-(imidazol-4-yl)glycerol 3-phosphate + 5-amino-1-(5-phospho-beta-D-ribosyl)imidazole-4-carboxamide + L-glutamate + H(+). The protein operates within amino-acid biosynthesis; L-histidine biosynthesis; L-histidine from 5-phospho-alpha-D-ribose 1-diphosphate: step 5/9. In terms of biological role, IGPS catalyzes the conversion of PRFAR and glutamine to IGP, AICAR and glutamate. The HisF subunit catalyzes the cyclization activity that produces IGP and AICAR from PRFAR using the ammonia provided by the HisH subunit. In Polynucleobacter necessarius subsp. necessarius (strain STIR1), this protein is Imidazole glycerol phosphate synthase subunit HisF.